A 69-amino-acid chain; its full sequence is Large ribosomal subunit protein uL29 (69 aa).

It belongs to the universal ribosomal protein uL29 family.

The protein is Large ribosomal subunit protein uL29 of Oenococcus oeni (strain ATCC BAA-331 / PSU-1).